Reading from the N-terminus, the 194-residue chain is UPF0301 protein CBU_2093 (194 aa).

Belongs to the UPF0301 (AlgH) family.

In Coxiella burnetii (strain RSA 493 / Nine Mile phase I), this protein is UPF0301 protein CBU_2093.